Here is a 526-residue protein sequence, read N- to C-terminus: Maturase K (526 aa).

Belongs to the intron maturase 2 family. MatK subfamily.

The protein localises to the plastid. Its subcellular location is the chloroplast. Functionally, usually encoded in the trnK tRNA gene intron. Probably assists in splicing its own and other chloroplast group II introns. The chain is Maturase K from Iris setosa (Hiougi-ayame).